The chain runs to 58 residues: Ranakinin-N (58 aa).

The N-terminal stretch at 1-22 (MFTMKKSLLLLFFLGTISMSLC) is a signal peptide. Positions 23-43 (EEKRDADEEETEGEAKMEDIK) are excised as a propeptide. A disordered region spans residues 25 to 58 (KRDADEEETEGEAKMEDIKRAEAVPPGFTPFRKP). Residues 35–46 (GEAKMEDIKRAE) are compositionally biased toward basic and acidic residues.

In terms of tissue distribution, expressed by the skin glands.

It localises to the secreted. Induces contraction of intestinal smooth muscle in isolated guinea pig ileum. May induce relaxation of arterial smooth muscle. May target bradykinin receptors (BDKRB). Lacks antibacterial activity against the Gram-positive bacterium S.aureus and the Gram-negative bacteria E.coli and B.dysenteria, and antifungal activity against C.albicans. In Hylarana nigrovittata (Black-striped frog), this protein is Ranakinin-N.